The following is a 441-amino-acid chain: NSKSQMDKDYYQLQAVLEAERRDRGHDSEKIGDLQARITSLQEEVKHLKHNLERVEGERKEAQDMLNHSEKEKNNLEIDLNYKLKSLQQRLEQEVNEHKVTKARLTDKHQSIEEAKSVAMCEMEKKLKEERDAREKAENRVVQIEKQCSMLDVDLKQSQQKLEHLIENKDRMEDEVKNLTLQLEQESNKRLLLQNELKTQAFEADNLKGLEKQMKQEINTLLEAKRLLEFELAQLTKQYRGNEGQMRELQDQLEAEQYFSTLYKTQVKELKEEIEEKNRENLKKIQELQSEKETLATQLDLAETKAESEQLARGLLEEQYFELTQESKKAASRNRQEITDKDHTLSRLEETNSMLTKDIELLRKENEELTDKMRKAEEEYKLKKEEEINILKAAFEKNINTERTLKTQAVNKLAEIMNRKDFKIDRKKANTQDLRKKKKKK.

Positions 1–99 (NSKSQMDKDY…RLEQEVNEHK (99 aa)) form a coiled coil. The SHROOM3 binding stretch occupies residues 114–353 (EAKSVAMCEM…TLSRLEETNS (240 aa)). The RhoBD domain occupies 356–422 (TKDIELLRKE…LAEIMNRKDF (67 aa)). The stretch at 418 to 441 (NRKDFKIDRKKANTQDLRKKKKKK) forms a coiled coil.

Belongs to the protein kinase superfamily. AGC Ser/Thr protein kinase family. Homodimer. Interacts with RHOA (activated by GTP), RHOB, RHOC, GEM, MYLC2B, RHOE, PPP1R12A, LIMK1, LIMK2, TSG101, CHORDC1, DAPK3, PFN1, PTEN and JIP3. Interacts with FHOD1 in a Src-dependent manner. Interacts with ITGB1BP1 (via N-terminus and PTB domain). Interacts with SHROOM3. The cofactor is Mg(2+).

Its subcellular location is the cytoplasm. It is found in the golgi apparatus membrane. It localises to the cytoskeleton. The protein localises to the microtubule organizing center. The protein resides in the centrosome. Its subcellular location is the centriole. It is found in the cell projection. It localises to the bleb. The protein localises to the cell membrane. The protein resides in the lamellipodium. Its subcellular location is the ruffle. The catalysed reaction is L-seryl-[protein] + ATP = O-phospho-L-seryl-[protein] + ADP + H(+). It catalyses the reaction L-threonyl-[protein] + ATP = O-phospho-L-threonyl-[protein] + ADP + H(+). Its activity is regulated as follows. Activated by RHOA binding. Inhibited by Y-27632. Protein kinase which is a key regulator of the actin cytoskeleton and cell polarity. Involved in regulation of smooth muscle contraction, actin cytoskeleton organization, stress fiber and focal adhesion formation, neurite retraction, cell adhesion and motility via phosphorylation of DAPK3, GFAP, LIMK1, LIMK2, MYL9/MLC2, TPPP, PFN1 and PPP1R12A. Phosphorylates FHOD1 and acts synergistically with it to promote SRC-dependent non-apoptotic plasma membrane blebbing. Phosphorylates JIP3 and regulates the recruitment of JNK to JIP3 upon UVB-induced stress. Acts as a suppressor of inflammatory cell migration by regulating PTEN phosphorylation and stability. Acts as a negative regulator of VEGF-induced angiogenic endothelial cell activation. Required for centrosome positioning and centrosome-dependent exit from mitosis. Plays a role in terminal erythroid differentiation. Inhibits podocyte motility via regulation of actin cytoskeletal dynamics and phosphorylation of CFL1. Promotes keratinocyte terminal differentiation. Involved in osteoblast compaction through the fibronectin fibrillogenesis cell-mediated matrix assembly process, essential for osteoblast mineralization. May regulate closure of the eyelids and ventral body wall by inducing the assembly of actomyosin bundles. This is Rho-associated protein kinase 1 (ROCK1) from Bos taurus (Bovine).